Consider the following 479-residue polypeptide: MIRRFRRTKIVATLGPSTDNHIILENMIKSGVNVFRLNFSHGTREEHIYRAKLVTSIAKRLNCHIALLGDLQGPKIRICKFQDKKVFLKVNNYFILDANLNENLGTSERVGIDYKNLPKDVKKCDILLLDDGKIQLKVINIVDQEIFTKIIIGGVLSNNKGINKLGGGLSARILTKKDKRDIITSIDIGVDYLAVSFPRYGSDLDHARKCAVKFGSKAKIIAKIERAEAVKDLKIIDEIILASDAIMVARGDLGVEIGESELAGIQKTLIRRARQLNRVVITATQMMESMINNPMPTRAEVMDVANAVLDGSDAVMLSAETASGKYPIETIKVMSKVCMGAEKMPSINVSQHRIHDKFHDIEEAIAMSAMYAANHLSGITAIITMTESGKTSLMTSRITSGLPIFALSSHIQTLKLTALYRGVTPIFFNSSKEGVSAANEVINLLVKRGFLEPGNLVIITQGDIMGKVGKTNTSRILKV.

Arginine 36 is a substrate binding site. K(+) contacts are provided by asparagine 38, serine 40, and aspartate 70. 38–41 (NFSH) lines the ATP pocket. Residues arginine 77 and lysine 160 each coordinate ATP. A Mg(2+)-binding site is contributed by glutamate 225. The substrate site is built by glycine 251, aspartate 252, and threonine 284. Residue aspartate 252 coordinates Mg(2+).

This sequence belongs to the pyruvate kinase family. Homotetramer. Mg(2+) serves as cofactor. Requires K(+) as cofactor.

The catalysed reaction is pyruvate + ATP = phosphoenolpyruvate + ADP + H(+). The protein operates within carbohydrate degradation; glycolysis; pyruvate from D-glyceraldehyde 3-phosphate: step 5/5. Allosterically activated by AMP and by several sugar phosphates. Belongs to type II PK. This chain is Pyruvate kinase (pykA), found in Buchnera aphidicola subsp. Baizongia pistaciae (strain Bp).